The chain runs to 401 residues: Elongation factor Tu 1 (401 aa).

The region spanning 10–209 (KPHVNVGTIG…AVDEYIPTPV (200 aa)) is the tr-type G domain. The G1 stretch occupies residues 19-26 (GHVDHGKT). 19 to 26 (GHVDHGKT) provides a ligand contact to GTP. Thr26 is a Mg(2+) binding site. The interval 60–64 (GITIA) is G2. Positions 81–84 (DCPG) are G3. Residues 81–85 (DCPGH) and 136–139 (NKVD) contribute to the GTP site. Residues 136–139 (NKVD) form a G4 region. A G5 region spans residues 174-176 (SAL).

It belongs to the TRAFAC class translation factor GTPase superfamily. Classic translation factor GTPase family. EF-Tu/EF-1A subfamily. Monomer.

Its subcellular location is the cytoplasm. The enzyme catalyses GTP + H2O = GDP + phosphate + H(+). In terms of biological role, GTP hydrolase that promotes the GTP-dependent binding of aminoacyl-tRNA to the A-site of ribosomes during protein biosynthesis. The sequence is that of Elongation factor Tu 1 from Roseiflexus sp. (strain RS-1).